The following is a 410-amino-acid chain: Proteasome-activating nucleotidase (410 aa).

Residues 1 to 70 are a coiled coil; it reads MENNSQNVLK…LRGEIERFRT (70 aa). ATP is bound by residues 195–200 and His-334; that span reads GTGKTL. Positions 408 to 410 are docks into pockets in the proteasome alpha-ring to cause gate opening; the sequence is MFG.

It belongs to the AAA ATPase family. Homohexamer. The hexameric complex has a two-ring architecture resembling a top hat that caps the 20S proteasome core at one or both ends. Upon ATP-binding, the C-terminus of PAN interacts with the alpha-rings of the proteasome core by binding to the intersubunit pockets.

Its subcellular location is the cytoplasm. ATPase which is responsible for recognizing, binding, unfolding and translocation of substrate proteins into the archaeal 20S proteasome core particle. Is essential for opening the gate of the 20S proteasome via an interaction with its C-terminus, thereby allowing substrate entry and access to the site of proteolysis. Thus, the C-termini of the proteasomal ATPase function like a 'key in a lock' to induce gate opening and therefore regulate proteolysis. Unfolding activity requires energy from ATP hydrolysis, whereas ATP binding alone promotes ATPase-20S proteasome association which triggers gate opening, and supports translocation of unfolded substrates. The sequence is that of Proteasome-activating nucleotidase from Methanothermobacter thermautotrophicus (strain ATCC 29096 / DSM 1053 / JCM 10044 / NBRC 100330 / Delta H) (Methanobacterium thermoautotrophicum).